Reading from the N-terminus, the 171-residue chain is Regulator of ribonuclease activity A (171 aa).

The protein belongs to the RraA family. Homotrimer. Binds to both RNA-binding sites in the C-terminal region of Rne and to RhlB.

It is found in the cytoplasm. Globally modulates RNA abundance by binding to RNase E (Rne) and regulating its endonucleolytic activity. Can modulate Rne action in a substrate-dependent manner by altering the composition of the degradosome. Modulates RNA-binding and helicase activities of the degradosome. This chain is Regulator of ribonuclease activity A, found in Vibrio cholerae serotype O1 (strain ATCC 39315 / El Tor Inaba N16961).